The sequence spans 547 residues: CTP synthase (547 aa).

An amidoligase domain region spans residues Met-1–Leu-267. Ser-14 contacts CTP. Ser-14 lines the UTP pocket. Residues Ser-15–Leu-20 and Asp-72 each bind ATP. The Mg(2+) site is built by Asp-72 and Glu-141. Residues Asp-148–Glu-150, Lys-188–Gln-193, and Lys-224 contribute to the CTP site. UTP-binding positions include Lys-188–Gln-193 and Lys-224. In terms of domain architecture, Glutamine amidotransferase type-1 spans Thr-292–Gly-545. Position 354 (Gly-354) interacts with L-glutamine. The Nucleophile; for glutamine hydrolysis role is filled by Cys-381. Residues Leu-382–Gln-385, Glu-405, and Arg-473 contribute to the L-glutamine site. Active-site residues include His-518 and Glu-520.

This sequence belongs to the CTP synthase family. As to quaternary structure, homotetramer.

The catalysed reaction is UTP + L-glutamine + ATP + H2O = CTP + L-glutamate + ADP + phosphate + 2 H(+). It catalyses the reaction L-glutamine + H2O = L-glutamate + NH4(+). It carries out the reaction UTP + NH4(+) + ATP = CTP + ADP + phosphate + 2 H(+). Its pathway is pyrimidine metabolism; CTP biosynthesis via de novo pathway; CTP from UDP: step 2/2. Its activity is regulated as follows. Allosterically activated by GTP, when glutamine is the substrate; GTP has no effect on the reaction when ammonia is the substrate. The allosteric effector GTP functions by stabilizing the protein conformation that binds the tetrahedral intermediate(s) formed during glutamine hydrolysis. Inhibited by the product CTP, via allosteric rather than competitive inhibition. Catalyzes the ATP-dependent amination of UTP to CTP with either L-glutamine or ammonia as the source of nitrogen. Regulates intracellular CTP levels through interactions with the four ribonucleotide triphosphates. The protein is CTP synthase of Nitratidesulfovibrio vulgaris (strain DP4) (Desulfovibrio vulgaris).